Consider the following 146-residue polypeptide: Large ribosomal subunit protein bL21 (146 aa).

The tract at residues isoleucine 117–asparagine 146 is disordered. The span at serine 128–asparagine 146 shows a compositional bias: basic and acidic residues.

The protein belongs to the bacterial ribosomal protein bL21 family. As to quaternary structure, part of the 50S ribosomal subunit. Contacts protein L20.

Its function is as follows. This protein binds to 23S rRNA in the presence of protein L20. The sequence is that of Large ribosomal subunit protein bL21 from Prochlorococcus marinus (strain MIT 9301).